The sequence spans 595 residues: MYYTEESLETLKHSIDIVSVLGEYVHLKRSGADYKACCPFHDEKTPSFIVYPTRGHYHCYGCGEHGDAINFLMKQQGYSFSEAVLFLAKKFHVDLVVRTKETSGQDSKDSLRRINREAERFFQYCLLHLPEGEEALAYLYKRGFSPDTIDRFQIGYAPEQRLFIQAMEERNISVKQLEWAGYLAKDWFLFAQRIMFPIQDALGYTIGFSSRRFKEGGRGGKYINSPETILFKKSRVLYGLQFSRKRIAKERRVILVEGQADCLQMIDFGFNCTLAAQGTSFTETHVHELVKLGVSKAYLLFDGDAAGEKASLRVGDLCQAAGITAIVCRLPSGQDPDSFLMQRGPEELRELLDRGEDYLSFLVWHKIHSYEQFTPREKARVIEEVIQQVRCWGSPITIHEYLRQLASLVKVPEPAVLSYLSSITSAAEDKGKKVSAKEPSSESKQTSTEGKISKKISPRMILEADVIRCLLFAKPEDEFVPATVKQYLSPEEFHCAEYRAIFVMAMNHYNDRQTLPSMDEMMSLVVGTEAMTLLVARRMNTELMRDIVVQSIQKLLDKHWRDKKRKLCHQTGKGLDSLQEYVRLSGERVKVSLVS.

The CHC2-type zinc-finger motif lies at 38-62 (CPFHDEKTPSFIVYPTRGHYHCYGC). In terms of domain architecture, Toprim spans 251–331 (RRVILVEGQA…GITAIVCRLP (81 aa)). 3 residues coordinate Mg(2+): E257, D302, and D304. Over residues 430–441 (KGKKVSAKEPSS) the composition is skewed to basic and acidic residues. The interval 430–451 (KGKKVSAKEPSSESKQTSTEGK) is disordered.

Belongs to the DnaG primase family. Monomer. Interacts with DnaB. Zn(2+) serves as cofactor. It depends on Mg(2+) as a cofactor.

It catalyses the reaction ssDNA + n NTP = ssDNA/pppN(pN)n-1 hybrid + (n-1) diphosphate.. In terms of biological role, RNA polymerase that catalyzes the synthesis of short RNA molecules used as primers for DNA polymerase during DNA replication. The protein is DNA primase of Chlamydia trachomatis serovar D (strain ATCC VR-885 / DSM 19411 / UW-3/Cx).